Here is a 94-residue protein sequence, read N- to C-terminus: Small ribosomal subunit protein uS19 (94 aa).

This sequence belongs to the universal ribosomal protein uS19 family.

Functionally, protein S19 forms a complex with S13 that binds strongly to the 16S ribosomal RNA. In Desulforamulus reducens (strain ATCC BAA-1160 / DSM 100696 / MI-1) (Desulfotomaculum reducens), this protein is Small ribosomal subunit protein uS19.